Here is a 443-residue protein sequence, read N- to C-terminus: ATP-dependent protease ATPase subunit HslU (443 aa).

ATP is bound by residues isoleucine 19, 61 to 66 (GVGKTE), aspartate 256, glutamate 321, and arginine 393.

This sequence belongs to the ClpX chaperone family. HslU subfamily. A double ring-shaped homohexamer of HslV is capped on each side by a ring-shaped HslU homohexamer. The assembly of the HslU/HslV complex is dependent on binding of ATP.

The protein resides in the cytoplasm. In terms of biological role, ATPase subunit of a proteasome-like degradation complex; this subunit has chaperone activity. The binding of ATP and its subsequent hydrolysis by HslU are essential for unfolding of protein substrates subsequently hydrolyzed by HslV. HslU recognizes the N-terminal part of its protein substrates and unfolds these before they are guided to HslV for hydrolysis. The chain is ATP-dependent protease ATPase subunit HslU from Ralstonia nicotianae (strain ATCC BAA-1114 / GMI1000) (Ralstonia solanacearum).